The sequence spans 1203 residues: DNA-directed RNA polymerase subunit beta (1203 aa).

Residues 1174-1195 show a composition bias toward basic and acidic residues; the sequence is AAQEAKAAFEAEEAEKATKAEA. Residues 1174 to 1203 are disordered; it reads AAQEAKAAFEAEEAEKATKAEATEEAAEQE.

It belongs to the RNA polymerase beta chain family. The RNAP catalytic core consists of 2 alpha, 1 beta, 1 beta' and 1 omega subunit. When a sigma factor is associated with the core the holoenzyme is formed, which can initiate transcription.

It catalyses the reaction RNA(n) + a ribonucleoside 5'-triphosphate = RNA(n+1) + diphosphate. DNA-dependent RNA polymerase catalyzes the transcription of DNA into RNA using the four ribonucleoside triphosphates as substrates. The chain is DNA-directed RNA polymerase subunit beta from Streptococcus pneumoniae (strain P1031).